A 335-amino-acid polypeptide reads, in one-letter code: Corrinoid adenosyltransferase PduO (335 aa).

His-206 provides a ligand contact to heme.

Belongs to the Cob(I)alamin adenosyltransferase family. PduO subfamily. Forms a complex with PduS. Heme b serves as cofactor. Requires Mg(2+) as cofactor.

Its subcellular location is the bacterial microcompartment. The catalysed reaction is cob(I)alamin-[corrinoid adenosyltransferase] + ATP = apo-[corrinoid adenosyltransferase] + adenosylcob(III)alamin + triphosphate. Its pathway is polyol metabolism; 1,2-propanediol degradation. It participates in cofactor biosynthesis; adenosylcobalamin biosynthesis. Functionally, converts cob(I)alamin to adenosylcobalamin (adenosylcob(III)alamin), the cofactor for propanediol dehydratase. Found in the bacterial microcompartment (BMC) dedicated to 1,2-propanediol (1,2-PD) degradation. PduS and PduO allow regeneration of the adenosylcobalamin cofactor within the BMC. Expression of a cosmid containing the full 21-gene pdu operon in E.coli allows E.coli to grow on 1,2-propanediol (1,2-PD) with the appearance of bacterial microcompartments (BMC) in its cytoplasm. In terms of biological role, the 1,2-PD-specific bacterial microcompartment (BMC) concentrates low levels of 1,2-PD catabolic enzymes, concentrates volatile reaction intermediates thus enhancing pathway flux and keeps the level of toxic, mutagenic propionaldehyde low. This Citrobacter freundii protein is Corrinoid adenosyltransferase PduO.